Reading from the N-terminus, the 262-residue chain is ABSCISIC ACID-INSENSITIVE 5-like protein 3 (262 aa).

Phosphoserine occurs at positions 21, 43, and 66. A Phosphothreonine modification is found at Thr-104. The bZIP domain occupies 190-253 (VERRQKRMIK…SEPPPDPKWK (64 aa)). Residues 192 to 211 (RRQKRMIKNRESAARSRARK) are basic motif. The tract at residues 218–232 (LEIKVSRLEEENEKL) is leucine-zipper. The segment covering 239–252 (EKILPSEPPPDPKW) has biased composition (basic and acidic residues). The disordered stretch occupies residues 239 to 262 (EKILPSEPPPDPKWKLRRTNSASL).

The protein belongs to the bZIP family. ABI5 subfamily. As to quaternary structure, DNA-binding heterodimer with ABI5/DPBF1, DPBF2 or AREB3/DPBF3. Interacts with the AFP proteins AFP2, AFP3 and AFP4. Predominantly expressed in seeds.

Its subcellular location is the nucleus. In terms of biological role, binds to the embryo specification element and the ABA-responsive element (ABRE) of the Dc3 gene promoter and to the ABRE of the Em1 gene promoter. Could participate in abscisic acid-regulated gene expression during seed development. The polypeptide is ABSCISIC ACID-INSENSITIVE 5-like protein 3 (DPBF4) (Arabidopsis thaliana (Mouse-ear cress)).